We begin with the raw amino-acid sequence, 1507 residues long: Protein TIC 214 (1507 aa).

6 helical membrane-spanning segments follow: residues 4 to 24 (IYLVPFFLGTFSGFLATLPIG), 53 to 73 (TILLASLCGLIFAQFLFVLAL), 81 to 101 (LWVKPHFFSFFFVLVLFIYLY), 129 to 149 (AFLETLLLQLLNPVVLPNPVF), 163 to 183 (ISTFFAGNFLGLLSGYGIFFL), and 202 to 222 (LVKIKIHQFFGIILVIFSFLC).

It belongs to the TIC214 family. Part of the Tic complex.

Its subcellular location is the plastid. It is found in the chloroplast inner membrane. Its function is as follows. Involved in protein precursor import into chloroplasts. May be part of an intermediate translocation complex acting as a protein-conducting channel at the inner envelope. This Staurastrum punctulatum (Green alga) protein is Protein TIC 214.